Consider the following 69-residue polypeptide: Light-harvesting protein B-870 beta chain (69 aa).

Positions 1 to 2 (MA) are excised as a propeptide. The Cytoplasmic portion of the chain corresponds to 3-22 (EVKQESLSGITEGEAKEFHK). 2 residues coordinate a bacteriochlorophyll: histidine 21 and histidine 39. Residues 23–45 (IFTSSILVFFGVAAFAHLLVWIW) form a helical membrane-spanning segment. Topologically, residues 46-56 (RPWVPGPNGYS) are periplasmic. A propeptide spanning residues 57 to 69 (ALETLTQTLTYLS) is cleaved from the precursor.

The protein belongs to the antenna complex beta subunit family. In terms of assembly, the core complex is formed by different alpha and beta chains, binding bacteriochlorophyll molecules, and arranged most probably in tetrameric structures disposed around the reaction center. The non-pigmented gamma chains may constitute additional components.

It is found in the cell inner membrane. In terms of biological role, antenna complexes are light-harvesting systems, which transfer the excitation energy to the reaction centers. This chain is Light-harvesting protein B-870 beta chain, found in Rhodospirillum rubrum (strain ATCC 11170 / ATH 1.1.1 / DSM 467 / LMG 4362 / NCIMB 8255 / S1).